A 77-amino-acid chain; its full sequence is U11-lycotoxin-Ls1a (77 aa).

An N-terminal signal peptide occupies residues 1–20; that stretch reads MKLIILTGLVLFAIVSFIEA. Positions 21 to 26 are excised as a propeptide; that stretch reads EEETGR.

It belongs to the neurotoxin 19 (CSTX) family. 10 (U11-Lctx) subfamily. Post-translationally, contains 4 disulfide bonds. In terms of tissue distribution, expressed by the venom gland.

The protein localises to the secreted. The sequence is that of U11-lycotoxin-Ls1a from Lycosa singoriensis (Wolf spider).